Reading from the N-terminus, the 430-residue chain is Long-chain specific acyl-CoA dehydrogenase, mitochondrial (430 aa).

Residues 1–30 (MAARLLRGSLRVLGGHRAPRQLPAARCSHS) constitute a mitochondrion transit peptide. Residue Lys42 is modified to N6-acetyllysine. Position 54 is a phosphoserine (Ser54). Residues Lys66 and Lys81 each carry the N6-acetyllysine; alternate modification. Residues Lys66 and Lys81 each carry the N6-succinyllysine; alternate modification. Residues Lys92 and Lys95 each carry the N6-acetyllysine modification. At Lys165 the chain carries N6-succinyllysine. Residues 170–179 (IAMTEPGAGS) and 203–205 (FIS) contribute to the FAD site. Residue Ser179 participates in substrate binding. A substrate-binding site is contributed by 227 to 228 (AH). Lys240 is modified (N6-succinyllysine). Lys254 and Lys279 each carry N6-acetyllysine; alternate. N6-succinyllysine; alternate occurs at positions 254 and 279. Substrate-binding positions include Tyr282 and 289 to 292 (PQER). Residue Glu291 is the Proton acceptor of the active site. An FAD-binding site is contributed by Arg317. Lys318 carries the post-translational modification N6-acetyllysine. Lys322 carries the post-translational modification N6-acetyllysine; alternate. The residue at position 322 (Lys322) is an N6-succinyllysine; alternate. Gln328 serves as a coordination point for FAD. Position 358 is an N6-acetyllysine (Lys358). Ser362 bears the Phosphoserine mark. Residue 385 to 389 (QLHGG) participates in FAD binding. 412-413 (GG) provides a ligand contact to substrate. Residue 414-416 (TNE) coordinates FAD.

Belongs to the acyl-CoA dehydrogenase family. As to quaternary structure, homotetramer. FAD serves as cofactor. Acetylation at Lys-318 and Lys-322 in proximity of the cofactor-binding sites strongly reduces catalytic activity. These sites are deacetylated by SIRT3.

It is found in the mitochondrion matrix. The catalysed reaction is a long-chain 2,3-saturated fatty acyl-CoA + oxidized [electron-transfer flavoprotein] + H(+) = a long-chain (2E)-enoyl-CoA + reduced [electron-transfer flavoprotein]. It catalyses the reaction hexanoyl-CoA + oxidized [electron-transfer flavoprotein] + H(+) = (2E)-hexenoyl-CoA + reduced [electron-transfer flavoprotein]. It carries out the reaction octanoyl-CoA + oxidized [electron-transfer flavoprotein] + H(+) = (2E)-octenoyl-CoA + reduced [electron-transfer flavoprotein]. The enzyme catalyses decanoyl-CoA + oxidized [electron-transfer flavoprotein] + H(+) = (2E)-decenoyl-CoA + reduced [electron-transfer flavoprotein]. The catalysed reaction is dodecanoyl-CoA + oxidized [electron-transfer flavoprotein] + H(+) = (2E)-dodecenoyl-CoA + reduced [electron-transfer flavoprotein]. It catalyses the reaction tetradecanoyl-CoA + oxidized [electron-transfer flavoprotein] + H(+) = (2E)-tetradecenoyl-CoA + reduced [electron-transfer flavoprotein]. It carries out the reaction oxidized [electron-transfer flavoprotein] + hexadecanoyl-CoA + H(+) = (2E)-hexadecenoyl-CoA + reduced [electron-transfer flavoprotein]. The enzyme catalyses octadecanoyl-CoA + oxidized [electron-transfer flavoprotein] + H(+) = (2E)-octadecenoyl-CoA + reduced [electron-transfer flavoprotein]. The catalysed reaction is eicosanoyl-CoA + oxidized [electron-transfer flavoprotein] + H(+) = (2E)-eicosenoyl-CoA + reduced [electron-transfer flavoprotein]. It catalyses the reaction docosanoyl-CoA + oxidized [electron-transfer flavoprotein] + H(+) = (2E)-docosenoyl-CoA + reduced [electron-transfer flavoprotein]. It carries out the reaction tetracosanoyl-CoA + oxidized [electron-transfer flavoprotein] + H(+) = (2E)-tetracosenoyl-CoA + reduced [electron-transfer flavoprotein]. The enzyme catalyses (5E)-tetradecenoyl-CoA + oxidized [electron-transfer flavoprotein] + H(+) = (2E,5E)-tetradecadienoyl-CoA + reduced [electron-transfer flavoprotein]. The catalysed reaction is (5Z)-tetradecenoyl-CoA + oxidized [electron-transfer flavoprotein] + H(+) = (2E,5Z)-tetradecadienoyl-CoA + reduced [electron-transfer flavoprotein]. It catalyses the reaction oxidized [electron-transfer flavoprotein] + (9Z)-octadecenoyl-CoA + H(+) = (2E,9Z)-octadecadienoyl-CoA + reduced [electron-transfer flavoprotein]. It functions in the pathway lipid metabolism; mitochondrial fatty acid beta-oxidation. Its function is as follows. Long-chain specific acyl-CoA dehydrogenase is one of the acyl-CoA dehydrogenases that catalyze the first step of mitochondrial fatty acid beta-oxidation, an aerobic process breaking down fatty acids into acetyl-CoA and allowing the production of energy from fats. The first step of fatty acid beta-oxidation consists in the removal of one hydrogen from C-2 and C-3 of the straight-chain fatty acyl-CoA thioester, resulting in the formation of trans-2-enoyl-CoA. Among the different mitochondrial acyl-CoA dehydrogenases, long-chain specific acyl-CoA dehydrogenase can act on saturated and unsaturated acyl-CoAs with 6 to 24 carbons with a preference for 8 to 18 carbons long primary chains. In Homo sapiens (Human), this protein is Long-chain specific acyl-CoA dehydrogenase, mitochondrial.